A 117-amino-acid polypeptide reads, in one-letter code: Large ribosomal subunit protein uL18 (117 aa).

This sequence belongs to the universal ribosomal protein uL18 family. As to quaternary structure, part of the 50S ribosomal subunit; part of the 5S rRNA/L5/L18/L25 subcomplex. Contacts the 5S and 23S rRNAs.

This is one of the proteins that bind and probably mediate the attachment of the 5S RNA into the large ribosomal subunit, where it forms part of the central protuberance. In Vibrio proteolyticus (Aeromonas proteolytica), this protein is Large ribosomal subunit protein uL18.